The chain runs to 413 residues: Putative competence-damage inducible protein (413 aa).

The protein belongs to the CinA family.

This Acetivibrio thermocellus (strain ATCC 27405 / DSM 1237 / JCM 9322 / NBRC 103400 / NCIMB 10682 / NRRL B-4536 / VPI 7372) (Clostridium thermocellum) protein is Putative competence-damage inducible protein.